A 296-amino-acid chain; its full sequence is 4-hydroxybenzoate octaprenyltransferase (296 aa).

8 helical membrane-spanning segments follow: residues 29–49 (IGVYLLLWPTLWAVWIAGKGA), 52–72 (LQTVCIFVLGVFLMRAAGCVI), 102–122 (ALVLFAVLVGLSFVLVLFTNA), 146–166 (YYPQVVLGAAFSWGMPMAFTA), 169–189 (GELPAAAWLLYIANLLWTVGY), 219–239 (VIILTLQGLALGCLMLAGARF), 241–261 (LGACFYIGLLAAAGCFAWEFW), and 275–295 (FLHNHWAGLAIFLGIVADYAV).

This sequence belongs to the UbiA prenyltransferase family. Requires Mg(2+) as cofactor.

It is found in the cell inner membrane. The catalysed reaction is all-trans-octaprenyl diphosphate + 4-hydroxybenzoate = 4-hydroxy-3-(all-trans-octaprenyl)benzoate + diphosphate. It functions in the pathway cofactor biosynthesis; ubiquinone biosynthesis. Its function is as follows. Catalyzes the prenylation of para-hydroxybenzoate (PHB) with an all-trans polyprenyl group. Mediates the second step in the final reaction sequence of ubiquinone-8 (UQ-8) biosynthesis, which is the condensation of the polyisoprenoid side chain with PHB, generating the first membrane-bound Q intermediate 3-octaprenyl-4-hydroxybenzoate. The protein is 4-hydroxybenzoate octaprenyltransferase of Pseudomonas syringae pv. syringae (strain B728a).